Reading from the N-terminus, the 151-residue chain is Ribosome-binding factor A (151 aa).

The tract at residues Arg-120–Glu-151 is disordered.

It belongs to the RbfA family. In terms of assembly, monomer. Binds 30S ribosomal subunits, but not 50S ribosomal subunits or 70S ribosomes.

It localises to the cytoplasm. Its function is as follows. One of several proteins that assist in the late maturation steps of the functional core of the 30S ribosomal subunit. Associates with free 30S ribosomal subunits (but not with 30S subunits that are part of 70S ribosomes or polysomes). Required for efficient processing of 16S rRNA. May interact with the 5'-terminal helix region of 16S rRNA. This is Ribosome-binding factor A from Xanthobacter autotrophicus (strain ATCC BAA-1158 / Py2).